A 454-amino-acid polypeptide reads, in one-letter code: tRNA modification GTPase MnmE (454 aa).

Residues Arg-23, Glu-80, and Lys-120 each coordinate (6S)-5-formyl-5,6,7,8-tetrahydrofolate. The TrmE-type G domain occupies 216–377 (GMKVVIAGRP…LRDHLKQSMG (162 aa)). Residue Asn-226 participates in K(+) binding. GTP is bound by residues 226-231 (NAGKSS), 245-251 (TDIAGTT), 270-273 (DTAG), 335-338 (NKAD), and 358-360 (SAR). Ser-230 lines the Mg(2+) pocket. The K(+) site is built by Thr-245, Ile-247, and Thr-250. Thr-251 provides a ligand contact to Mg(2+). Lys-454 serves as a coordination point for (6S)-5-formyl-5,6,7,8-tetrahydrofolate.

This sequence belongs to the TRAFAC class TrmE-Era-EngA-EngB-Septin-like GTPase superfamily. TrmE GTPase family. In terms of assembly, homodimer. Heterotetramer of two MnmE and two MnmG subunits. It depends on K(+) as a cofactor.

It is found in the cytoplasm. In terms of biological role, exhibits a very high intrinsic GTPase hydrolysis rate. Involved in the addition of a carboxymethylaminomethyl (cmnm) group at the wobble position (U34) of certain tRNAs, forming tRNA-cmnm(5)s(2)U34. The protein is tRNA modification GTPase MnmE of Pectobacterium carotovorum subsp. carotovorum (strain PC1).